Consider the following 370-residue polypeptide: Phosphate acyltransferase (370 aa).

This sequence belongs to the PlsX family. In terms of assembly, homodimer. Probably interacts with PlsY.

Its subcellular location is the cytoplasm. It carries out the reaction a fatty acyl-[ACP] + phosphate = an acyl phosphate + holo-[ACP]. The protein operates within lipid metabolism; phospholipid metabolism. Its function is as follows. Catalyzes the reversible formation of acyl-phosphate (acyl-PO(4)) from acyl-[acyl-carrier-protein] (acyl-ACP). This enzyme utilizes acyl-ACP as fatty acyl donor, but not acyl-CoA. The protein is Phosphate acyltransferase of Polaromonas naphthalenivorans (strain CJ2).